A 391-amino-acid polypeptide reads, in one-letter code: ATP-sensitive inward rectifier potassium channel 1 (391 aa).

At 1–77 the chain is on the cytoplasmic side; it reads MGASERSVFR…IWTTVLDLKW (77 aa). Phosphoserine; by SGK1 is present on S44. The chain crosses the membrane as a helical span at residues 78 to 102; that stretch reads RYKMTVFITAFLGSWFLFGLLWYVV. Residues 103 to 127 are Extracellular-facing; sequence AYVHKDLPEFYPPDNRTPCVENING. Residue N117 is glycosylated (N-linked (GlcNAc...) asparagine). The segment at residues 128–139 is an intramembrane region (helical; Pore-forming); the sequence is MTSAFLFSLETQ. The pore-forming intramembrane region spans 140-146; that stretch reads VTIGYGF. The Selectivity filter signature appears at 141-146; the sequence is TIGYGF. Residues 147–155 lie on the Extracellular side of the membrane; sequence RFVTEQCAT. A helical membrane pass occupies residues 156–177; that stretch reads AIFLLIFQSILGVIINSFMCGA. Topologically, residues 178–391 are cytoplasmic; that stretch reads ILAKISRPKK…EVDETDDTQM (214 aa). Residues 180 to 207 are polyphosphoinositide (PIP2)-binding; the sequence is AKISRPKKRAKTITFSKNAVISKRGGKL. An ATP-binding site is contributed by 223-230; it reads GSHIYGKL.

It belongs to the inward rectifier-type potassium channel (TC 1.A.2.1) family. KCNJ1 subfamily. As to quaternary structure, interacts with SGK1 and SLC9A3R2/NHERF2. Phosphorylation at Ser-44 by SGK1 is necessary for its expression at the cell membrane. As to expression, mainly in kidney (renal cortex, medulla and papilla). In terms of tissue distribution, kidney.

It is found in the cell membrane. It carries out the reaction K(+)(in) = K(+)(out). With respect to regulation, inhibited by WNK3. Activated by phosphatidylinositol 4,5 biphosphate (PtdIns(4,5)P2). Inward rectifier potassium channels are characterized by a greater tendency to allow potassium to flow into the cell rather than out of it. Their voltage dependence is regulated by the concentration of extracellular potassium; as external potassium is raised, the voltage range of the channel opening shifts to more positive voltages. The inward rectification is mainly due to the blockage of outward current by internal magnesium. This channel is activated by internal ATP and can be blocked by external barium. In the kidney, probably plays a major role in potassium homeostasis. In terms of biological role, inward rectifier potassium channels are characterized by a greater tendency to allow potassium to flow into the cell rather than out of it. Their voltage dependence is regulated by the concentration of extracellular potassium; as external potassium is raised, the voltage range of the channel opening shifts to more positive voltages. The polypeptide is ATP-sensitive inward rectifier potassium channel 1 (Kcnj1) (Rattus norvegicus (Rat)).